The primary structure comprises 103 residues: Small ribosomal subunit protein uS10 (103 aa).

Belongs to the universal ribosomal protein uS10 family. As to quaternary structure, part of the 30S ribosomal subunit.

In terms of biological role, involved in the binding of tRNA to the ribosomes. In Shewanella pealeana (strain ATCC 700345 / ANG-SQ1), this protein is Small ribosomal subunit protein uS10.